A 362-amino-acid polypeptide reads, in one-letter code: 3-dehydroquinate synthase (362 aa).

NAD(+)-binding positions include D74–K79, G108–D112, T132–T133, K145, K154, and T172–T175. Positions 187, 250, and 267 each coordinate Zn(2+).

This sequence belongs to the sugar phosphate cyclases superfamily. Dehydroquinate synthase family. The cofactor is Co(2+). It depends on Zn(2+) as a cofactor. NAD(+) is required as a cofactor.

It is found in the cytoplasm. The catalysed reaction is 7-phospho-2-dehydro-3-deoxy-D-arabino-heptonate = 3-dehydroquinate + phosphate. It participates in metabolic intermediate biosynthesis; chorismate biosynthesis; chorismate from D-erythrose 4-phosphate and phosphoenolpyruvate: step 2/7. Functionally, catalyzes the conversion of 3-deoxy-D-arabino-heptulosonate 7-phosphate (DAHP) to dehydroquinate (DHQ). The polypeptide is 3-dehydroquinate synthase (Geobacter sp. (strain M21)).